We begin with the raw amino-acid sequence, 360 residues long: Peptide chain release factor 1 (360 aa).

Gln235 carries the post-translational modification N5-methylglutamine. The interval 285–311 is disordered; that stretch reads KRQQAQASERRNLLGSGDRSDRHRTYN. Over residues 292–308 the composition is skewed to basic and acidic residues; that stretch reads SERRNLLGSGDRSDRHR.

This sequence belongs to the prokaryotic/mitochondrial release factor family. In terms of processing, methylated by PrmC. Methylation increases the termination efficiency of RF1.

The protein resides in the cytoplasm. Its function is as follows. Peptide chain release factor 1 directs the termination of translation in response to the peptide chain termination codons UAG and UAA. The chain is Peptide chain release factor 1 from Hamiltonella defensa subsp. Acyrthosiphon pisum (strain 5AT).